We begin with the raw amino-acid sequence, 219 residues long: Poxin (219 aa).

Residue histidine 17 is the Proton donor of the active site. Catalysis depends on tyrosine 138, which acts as the Shared with catalytic histidine of dimeric partner. Catalysis depends on lysine 142, which acts as the Proton acceptor; shared with catalytic histidine of dimeric partner.

It belongs to the poxin family. In terms of assembly, homodimer.

It catalyses the reaction 2',3'-cGAMP + H2O = Gp(2'-5')Ap(3') + H(+). Its function is as follows. Nuclease that is responsible for viral evasion of host cGAS-STING innate immunity. Cleaves 2',3'-cGAMP which is produced by host cGAS following recognition of cytosolic DNA and blocks the subsequent 2',3'-cGAMP-mediated activation of TMEM173/STING, which normally spreads to adjacent cells and activates the interferon and NF-kappa-B immune responses. In Homo sapiens (Human), this protein is Poxin (OPG188).